Consider the following 557-residue polypeptide: Fanconi anemia group C protein homolog (557 aa).

As to quaternary structure, belongs to the multisubunit FA complex composed of FANCA, FANCB, FANCC, FANCE, FANCF, FANCG, FANCL/PHF9 and FANCM. This complex may also include HSP70. Interacts with ZBTB32. Upon IFNG induction, interacts with STAT1. Interacts with CDK1. Interacts with EIF2AK2.

The protein resides in the nucleus. It is found in the cytoplasm. Functionally, DNA repair protein that may operate in a postreplication repair or a cell cycle checkpoint function. May be implicated in interstrand DNA cross-link repair and in the maintenance of normal chromosome stability. Upon IFNG induction, may facilitate STAT1 activation by recruiting STAT1 to IFNGR1. The chain is Fanconi anemia group C protein homolog (Fancc) from Rattus norvegicus (Rat).